We begin with the raw amino-acid sequence, 300 residues long: Acetylglutamate kinase (300 aa).

Substrate is bound by residues 68-69, arginine 90, and asparagine 195; that span reads GG.

The protein belongs to the acetylglutamate kinase family. ArgB subfamily.

The protein localises to the cytoplasm. The catalysed reaction is N-acetyl-L-glutamate + ATP = N-acetyl-L-glutamyl 5-phosphate + ADP. The protein operates within amino-acid biosynthesis; L-arginine biosynthesis; N(2)-acetyl-L-ornithine from L-glutamate: step 2/4. Its function is as follows. Catalyzes the ATP-dependent phosphorylation of N-acetyl-L-glutamate. The sequence is that of Acetylglutamate kinase from Azotobacter vinelandii (strain DJ / ATCC BAA-1303).